We begin with the raw amino-acid sequence, 162 residues long: MTLGDTLFTLVTFLVLMLAVGKVAWKPVSKMMADRQQKISGDLDYAEKSRKDADALAAKRQEELQHSQADAVKIVNQAKENGEKQRQSLVDAANAEVTTMKKNAQTDIDQARKDALASAKNDVADLSLTIAQKLIGKELNADDQKGLIDDYIKRLGDANGSH.

The chain crosses the membrane as a helical span at residues 6-25 (TLFTLVTFLVLMLAVGKVAW).

It belongs to the ATPase B chain family. As to quaternary structure, F-type ATPases have 2 components, F(1) - the catalytic core - and F(0) - the membrane proton channel. F(1) has five subunits: alpha(3), beta(3), gamma(1), delta(1), epsilon(1). F(0) has three main subunits: a(1), b(2) and c(10-14). The alpha and beta chains form an alternating ring which encloses part of the gamma chain. F(1) is attached to F(0) by a central stalk formed by the gamma and epsilon chains, while a peripheral stalk is formed by the delta and b chains.

The protein resides in the cell membrane. Functionally, f(1)F(0) ATP synthase produces ATP from ADP in the presence of a proton or sodium gradient. F-type ATPases consist of two structural domains, F(1) containing the extramembraneous catalytic core and F(0) containing the membrane proton channel, linked together by a central stalk and a peripheral stalk. During catalysis, ATP synthesis in the catalytic domain of F(1) is coupled via a rotary mechanism of the central stalk subunits to proton translocation. Its function is as follows. Component of the F(0) channel, it forms part of the peripheral stalk, linking F(1) to F(0). In Lacticaseibacillus casei (strain BL23) (Lactobacillus casei), this protein is ATP synthase subunit b.